We begin with the raw amino-acid sequence, 1829 residues long: Iron-regulated protein FrpC (1829 aa).

Hemolysin-type calcium-binding repeat units lie at residues 869–886 (FGHNKNVSLYGNDGNDTL), 887–904 (IGGAGNDYLEGGSGSDTY), 1015–1032 (NGGLGDDYLYGADGDDLL), 1033–1050 (NGDAGNDSIYSGNGNDTL), 1051–1068 (DGGEGNDALYGYNGNDAL), 1069–1086 (NGGEGNDHLNGEDGNDTL), 1087–1104 (IGGAGNDYLEGGSGSDTY), 1215–1232 (NGGLGDDYLYGADGDDLL), 1233–1250 (NGDAGNDSIYSGNGNDTL), 1251–1268 (DGGEGNDALYGYNGNDAL), 1269–1286 (NGGEGNDHLNGEDGNDTL), 1287–1304 (IGGAGNDYLEGGSGSDTY), 1415–1432 (NGGLGDDYLYGADGDDLL), 1433–1450 (NGDAGNDSIYSGNGNDTL), 1451–1468 (NGGEGNDALYGYNGNDAL), 1469–1486 (NGGEGNDHLNGEDGNDTL), 1487–1504 (IGGAGNDYLEGGSGSDTY), 1615–1632 (NGGLGDDYLYGADGDDLL), 1633–1650 (NGDAGNDSIYSGNGNDTL), 1651–1668 (DGGEGNDALYGYNGNDAL), 1669–1686 (NGGEGNDHLNGEDGNDTL), and 1687–1704 (IGGAGNDYLEGGSGSDTY). Positions 1671-1690 (GEGNDHLNGEDGNDTLIGGA) are disordered.

It belongs to the RTX prokaryotic toxin (TC 1.C.11) family.

The protein resides in the cell outer membrane. Its subcellular location is the secreted. In terms of biological role, may participate in the pathogenesis of meningococcal disease. This Neisseria meningitidis serogroup B (strain ATCC BAA-335 / MC58) protein is Iron-regulated protein FrpC (frpC).